We begin with the raw amino-acid sequence, 107 residues long: UPF0060 membrane protein PSHAa1175 (107 aa).

Transmembrane regions (helical) follow at residues 3-23, 30-50, 60-80, and 84-104; these read IFGL…LPYL, SVWL…LLSL, AAYG…VDGI, and TWDL…MFAP.

This sequence belongs to the UPF0060 family.

It localises to the cell inner membrane. This chain is UPF0060 membrane protein PSHAa1175, found in Pseudoalteromonas translucida (strain TAC 125).